Consider the following 232-residue polypeptide: Large ribosomal subunit protein uL1 (232 aa).

Belongs to the universal ribosomal protein uL1 family. In terms of assembly, part of the 50S ribosomal subunit.

Binds directly to 23S rRNA. The L1 stalk is quite mobile in the ribosome, and is involved in E site tRNA release. In terms of biological role, protein L1 is also a translational repressor protein, it controls the translation of the L11 operon by binding to its mRNA. This is Large ribosomal subunit protein uL1 from Burkholderia ambifaria (strain MC40-6).